The sequence spans 428 residues: MTILPFLAAVFVLQLLSTLTVAEIKSFTISNDSRPVILLEKFGIIEIGHVTVSVSSVSVLSPILDSSKLGFFVLSEESLPHVLLELQQNFSFCVLDSHYILHFFTFVDLSPPPRSQFSKSYPITSPNDYSLFFANCVPETRVSMKVHTEIYHDLYPNGSRDYLLAGSAQLPGLYLVFFLCYLSFLCFWLCFCWNHKQIVKRIHLLMTALLLVKSLTLICAAVYKHYVKVTGTAHGWNIVFYIFQFISVVLLFMVIVLIGNGWSFLKPKLHVKEKKLLVIVVPLQVLANIASIVIGETGPYTQDWVSWNQIFFLADITCCCAIVFAMVWSMCCLRETSKTDGKAVKNLAKLPVLRKFYVLVIGYLFFTRIVVVVMKMKADFTYQWVSNAAEEIATLSFYCLMFYMFRPIEKNEYCDVDDEEEIVELSLK.

The first 22 residues, 1–22, serve as a signal peptide directing secretion; the sequence is MTILPFLAAVFVLQLLSTLTVA. 3 N-linked (GlcNAc...) asparagine glycosylation sites follow: asparagine 31, asparagine 89, and asparagine 157. The next 7 helical transmembrane spans lie at 173–193, 202–222, 238–258, 276–296, 310–330, 356–376, and 385–405; these read LYLVFFLCYLSFLCFWLCFCW, IHLLMTALLLVKSLTLICAAV, IVFYIFQFISVVLLFMVIVLI, LLVIVVPLQVLANIASIVIGE, IFFLADITCCCAIVFAMVWSM, FYVLVIGYLFFTRIVVVVMKM, and VSNAAEEIATLSFYCLMFYMF.

It belongs to the LU7TM family.

The protein resides in the membrane. G-protein coupled receptor. Plays a role in plants and microbes interactions. The chain is Protein CANDIDATE G-PROTEIN COUPLED RECEPTOR 6 from Arabidopsis thaliana (Mouse-ear cress).